Here is a 485-residue protein sequence, read N- to C-terminus: Chitin synthase regulator 2 (485 aa).

Sel1-like repeat units follow at residues 164–202 (PDAQ…KHGH), 203–238 (PDAC…VGLH), 239–275 (PGAM…EHAT), 279–316 (PHAL…ELGY), 317–353 (APSA…QQDH), 354–391 (KDAC…ELGL), and 392–427 (AKAQ…EGGD). The disordered stretch occupies residues 460 to 485 (AANLAQRSGSGSGASGKDGKDGCLIM). Positions 476 to 485 (KDGKDGCLIM) are enriched in basic and acidic residues. At cysteine 482 the chain carries Cysteine methyl ester. Cysteine 482 carries S-farnesyl cysteine lipidation. Residues 483-485 (LIM) constitute a propeptide, removed in mature form.

Belongs to the SKT5 family.

The protein resides in the cell membrane. In terms of biological role, activator of the chitin synthase CHS3 which polymerizes chitin, a structural polymer of the fungal cell wall. Chitin produced by CHS3 is deacetylated to chitosan, which helps to maintain cell wall integrity, anchor melanin, and offers an advantage during infection, as chitosan is less readily detected by host immunosurveillance. This is Chitin synthase regulator 2 from Cryptococcus neoformans var. grubii serotype A (strain H99 / ATCC 208821 / CBS 10515 / FGSC 9487) (Filobasidiella neoformans var. grubii).